The following is a 309-amino-acid chain: tRNA uridine(34) hydroxylase (309 aa).

The region spanning 126 to 220 (SDPEVIVIDT…YLEQIPPEES (95 aa)) is the Rhodanese domain. The active-site Cysteine persulfide intermediate is the Cys180.

It belongs to the TrhO family.

The enzyme catalyses uridine(34) in tRNA + AH2 + O2 = 5-hydroxyuridine(34) in tRNA + A + H2O. Its function is as follows. Catalyzes oxygen-dependent 5-hydroxyuridine (ho5U) modification at position 34 in tRNAs. This chain is tRNA uridine(34) hydroxylase, found in Nostoc sp. (strain PCC 7120 / SAG 25.82 / UTEX 2576).